A 793-amino-acid chain; its full sequence is MKVSKLWLREWVNFSLTEQELAEQLTMAGLEVDAVNPVAGQFTHVIVAEVLNTKPHPDADKLTLCEVNINKDKPLKIVCGAANVRPGLRVALAMIGAHLPGGLQIKESKLRGELSQGMLCSATELGLAEHSEGIMELSDEAPIGMDLREYLALDDHVFDIDLTPNRADCFSILGVAREVAVLNKLPLIEQPIVTVPPAIDDGLRVNLIHSEACPRYCGRIIRNLNLEAKTPLWMAERLRRGGIRTLHPVVDVMNYVMLELGQPMHAFDLSKINGEINVRYSASGEQLELLDGQEVVLNDNVLVIADKEKPLAMAGIMGGANSAVQEQTQHIFLESAYFNPVTIAGVARKYGLFSDSSQRFERGVDPCLQSKALERATELILSISGGEPGPVIESFDKKFLPGTVSFLFDTTKVKKLTGLSIPLNEMKNLLEGLGVVIIKETNHFFEVTIPSHRVDLQQDADLVEEIIRLYGYDKLQAQPMQTSVQAGLISAKEKIATHVSSWFSAKGYHETISYSFVDPELQEALYPQKEFMELLNPISSELSQMRAGMWPGLIASMIYNSHRQQTAVKFFEIGVVFDLDGGQLKERSCIAGLLMGEQGNLNWSESARLFDFYDLKGDLQSLFASLKLDDVEFIQSSHHALHPGQSAQIVINGKHSGWIGVLHPRLSDAFDLDQDVVLFELNLESLINPTIPLYKPISKYPQIRRDLSFLVDRQISAMQIERVIRNTVKEDWLKSFDVFDVYMGKGIPEDKKSIAVAMTLQDDTRTLVDAEINLTISAIIKKLENEFSILLRE.

The tRNA-binding domain occupies 39-148; it reads AGQFTHVIVA…DEAPIGMDLR (110 aa). The region spanning 401–477 is the B5 domain; that stretch reads PGTVSFLFDT…RLYGYDKLQA (77 aa). Mg(2+) is bound by residues Asp-455, Asp-461, Glu-464, and Glu-465. An FDX-ACB domain is found at 698–792; sequence SKYPQIRRDL…LENEFSILLR (95 aa).

The protein belongs to the phenylalanyl-tRNA synthetase beta subunit family. Type 1 subfamily. In terms of assembly, tetramer of two alpha and two beta subunits. Requires Mg(2+) as cofactor.

Its subcellular location is the cytoplasm. The catalysed reaction is tRNA(Phe) + L-phenylalanine + ATP = L-phenylalanyl-tRNA(Phe) + AMP + diphosphate + H(+). The chain is Phenylalanine--tRNA ligase beta subunit from Legionella pneumophila (strain Lens).